The primary structure comprises 410 residues: Iron-sulfur cluster assembly SufBD family protein MTH1150 homolog (410 aa).

Belongs to the iron-sulfur cluster assembly SufBD family.

This Methanothermobacter thermautotrophicus (strain Winter) (Methanobacterium thermoautotrophicum) protein is Iron-sulfur cluster assembly SufBD family protein MTH1150 homolog.